The chain runs to 242 residues: Small ribosomal subunit protein uS2 (242 aa).

This sequence belongs to the universal ribosomal protein uS2 family.

The polypeptide is Small ribosomal subunit protein uS2 (Shewanella pealeana (strain ATCC 700345 / ANG-SQ1)).